Consider the following 158-residue polypeptide: Transcription elongation factor GreB (158 aa).

Belongs to the GreA/GreB family. GreB subfamily.

In terms of biological role, necessary for efficient RNA polymerase transcription elongation past template-encoded arresting sites. The arresting sites in DNA have the property of trapping a certain fraction of elongating RNA polymerases that pass through, resulting in locked ternary complexes. Cleavage of the nascent transcript by cleavage factors such as GreA or GreB allows the resumption of elongation from the new 3'terminus. GreB releases sequences of up to 9 nucleotides in length. The protein is Transcription elongation factor GreB of Escherichia coli (strain K12).